A 1020-amino-acid chain; its full sequence is Sodium/potassium-transporting ATPase subunit alpha-2 (1020 aa).

Positions 1 to 5 are excised as a propeptide; that stretch reads MGRGA. The tract at residues 1-31 is disordered; the sequence is MGRGAGREYSPAATTAENGGGKKKQKEKELD. Over 6 to 85 the chain is Cytoplasmic; sequence GREYSPAATT…NALTPPPTTP (80 aa). Ser10 is subject to Phosphoserine. Positions 80–82 are interaction with phosphoinositide-3 kinase; that stretch reads PPP. The chain crosses the membrane as a helical span at residues 86-106; sequence EWVKFCRQLFGGFSILLWIGA. Residues 107–129 are Extracellular-facing; that stretch reads ILCFLAFGIQAAMEDEPSNDNLY. A helical membrane pass occupies residues 130–150; the sequence is LGVVLAAVVIVTGCFSYYQEA. Over 151–286 the chain is Cytoplasmic; the sequence is KSSKIMDSFK…VGRTPIAMEI (136 aa). Polar residues predominate over residues 212 to 227; it reads DNSSLTGESEPQTRSP. The segment at 212 to 231 is disordered; the sequence is DNSSLTGESEPQTRSPEFTH. The chain crosses the membrane as a helical span at residues 287–306; it reads EHFIQLITGVAVFLGVSFFV. The Extracellular portion of the chain corresponds to 307-318; that stretch reads LSLILGYSWLEA. A helical membrane pass occupies residues 319–336; sequence VIFLIGIIVANVPEGLLA. Topologically, residues 337 to 769 are cytoplasmic; sequence TVTVCLTLTA…EEGRLIFDNL (433 aa). Residue Asp374 is the 4-aspartylphosphate intermediate of the active site. Residues Ser439, Ser450, Ser496, and Ser559 each carry the phosphoserine modification. Thr570 is subject to Phosphothreonine. A phosphoserine mark is found at Ser587 and Ser672. 2 residues coordinate Mg(2+): Asp714 and Asp718. A helical membrane pass occupies residues 770 to 789; it reads KKSIAYTLTSNIPEITPFLL. Residues 790-799 lie on the Extracellular side of the membrane; sequence FIIANIPLPL. The chain crosses the membrane as a helical span at residues 800-820; sequence GTVTILCIDLGTDMVPAISLA. At 821–840 the chain is on the cytoplasmic side; sequence YEAAESDIMKRQPRNPQTDK. Ser826 is modified (phosphoserine). The chain crosses the membrane as a helical span at residues 841–863; the sequence is LVNERLISMAYGQIGMIQALGGF. The Extracellular segment spans residues 864 to 915; the sequence is FTYFVILAENGFLPSRLLGIRLDWDDRSMNDLEDSYGQEWTYEQRKVVEFTC. A helical transmembrane segment spans residues 916 to 935; that stretch reads HTAFFASIVVVQWADLIICK. Topologically, residues 936–948 are cytoplasmic; the sequence is TRRNSVFQQGMKN. At Ser940 the chain carries Phosphoserine; by PKA. A helical transmembrane segment spans residues 949 to 967; the sequence is KILIFGLLEETALAAFLSY. Topologically, residues 968–982 are extracellular; sequence CPGMGVALRMYPLKV. A helical membrane pass occupies residues 983–1003; the sequence is TWWFCAFPYSLLIFIYDEVRK. Over 1004 to 1020 the chain is Cytoplasmic; sequence LILRRYPGGWVEKETYY.

Belongs to the cation transport ATPase (P-type) (TC 3.A.3) family. Type IIC subfamily. The sodium/potassium-transporting ATPase is composed of a catalytic alpha subunit, an auxiliary non-catalytic beta subunit and an additional regulatory subunit. Interacts with regulatory subunit FXYD1.

Its subcellular location is the membrane. It localises to the cell membrane. The catalysed reaction is K(+)(out) + Na(+)(in) + ATP + H2O = K(+)(in) + Na(+)(out) + ADP + phosphate + H(+). Functionally, this is the catalytic component of the active enzyme, which catalyzes the hydrolysis of ATP coupled with the exchange of sodium and potassium ions across the plasma membrane. This action creates the electrochemical gradient of sodium and potassium, providing the energy for active transport of various nutrients. This is Sodium/potassium-transporting ATPase subunit alpha-2 (ATP1A2) from Bos taurus (Bovine).